The following is a 594-amino-acid chain: Golgi-associated RAB2 interactor protein 4 (594 aa).

The segment at 387 to 524 (MDAAAGPPVS…TSSGSSKGLG (138 aa)) is disordered. A compositionally biased stretch (polar residues) spans 396-406 (STRQSKSSLSG). Basic and acidic residues-rich tracts occupy residues 408-433 (HGRE…DRAL), 442-455 (TGES…DKIA), and 468-477 (ANRDDKKEKG). Residues 511 to 520 (SLWTTSSGSS) show a composition bias toward polar residues.

It belongs to the GARIN family. Interacts (via N-terminus) with RAB2B (in GTP-bound form).

It localises to the golgi apparatus. RAB2B effector protein required for the compacted Golgi morphology, probably through interaction with small GTPase RAB2B. In Homo sapiens (Human), this protein is Golgi-associated RAB2 interactor protein 4.